The sequence spans 380 residues: Magnesium-protoporphyrin IX monomethyl ester [oxidative] cyclase 1 (380 aa).

It belongs to the AcsF family. Fe cation is required as a cofactor.

It catalyses the reaction Mg-protoporphyrin IX 13-monomethyl ester + 3 NADPH + 3 O2 + 2 H(+) = 3,8-divinyl protochlorophyllide a + 3 NADP(+) + 5 H2O. The protein operates within porphyrin-containing compound metabolism; chlorophyll biosynthesis (light-independent). In terms of biological role, catalyzes the formation of the isocyclic ring in chlorophyll biosynthesis. Mediates the cyclase reaction, which results in the formation of divinylprotochlorophyllide (Pchlide) characteristic of all chlorophylls from magnesium-protoporphyrin IX 13-monomethyl ester (MgPMME). The sequence is that of Magnesium-protoporphyrin IX monomethyl ester [oxidative] cyclase 1 from Thermosynechococcus vestitus (strain NIES-2133 / IAM M-273 / BP-1).